A 179-amino-acid chain; its full sequence is Small ribosomal subunit protein uS5 (179 aa).

The region spanning 22 to 85 is the S5 DRBM domain; it reads MIEKLVAVNR…EYARKTMANV (64 aa).

This sequence belongs to the universal ribosomal protein uS5 family. Part of the 30S ribosomal subunit. Contacts proteins S4 and S8.

In terms of biological role, with S4 and S12 plays an important role in translational accuracy. Its function is as follows. Located at the back of the 30S subunit body where it stabilizes the conformation of the head with respect to the body. The protein is Small ribosomal subunit protein uS5 of Xylella fastidiosa (strain 9a5c).